The primary structure comprises 129 residues: Glycine cleavage system H protein (129 aa).

Residues 24–106 (LVRVGISAFA…HGEGWLLVLR (83 aa)) enclose the Lipoyl-binding domain. Lys65 is modified (N6-lipoyllysine).

The protein belongs to the GcvH family. The glycine cleavage system is composed of four proteins: P, T, L and H. (R)-lipoate is required as a cofactor.

In terms of biological role, the glycine cleavage system catalyzes the degradation of glycine. The H protein shuttles the methylamine group of glycine from the P protein to the T protein. This chain is Glycine cleavage system H protein, found in Parasynechococcus marenigrum (strain WH8102).